Consider the following 135-residue polypeptide: Ribosome-binding factor A (135 aa).

The protein belongs to the RbfA family. Monomer. Binds 30S ribosomal subunits, but not 50S ribosomal subunits or 70S ribosomes.

The protein resides in the cytoplasm. Its function is as follows. One of several proteins that assist in the late maturation steps of the functional core of the 30S ribosomal subunit. Associates with free 30S ribosomal subunits (but not with 30S subunits that are part of 70S ribosomes or polysomes). Required for efficient processing of 16S rRNA. May interact with the 5'-terminal helix region of 16S rRNA. The protein is Ribosome-binding factor A of Methylobacterium nodulans (strain LMG 21967 / CNCM I-2342 / ORS 2060).